The following is a 303-amino-acid chain: Rhomboid-related protein 2 (303 aa).

Positions 20-39 (MKEELEEEEKMREDGGGKDR) are disordered. A compositionally biased stretch (basic and acidic residues) spans 28–39 (EKMREDGGGKDR). The next 7 helical transmembrane spans lie at 72 to 92 (PVFI…YAVW), 128 to 148 (LVHA…VLGI), 159 to 179 (VGLV…IFDP), 183 to 203 (LVGA…NVLV), 212 to 232 (FGIF…GFAL), 245 to 265 (VSFA…YTVF), and 278 to 298 (FWIA…FNIF). The active-site Nucleophile is the Ser187. Residue His250 is part of the active site.

This sequence belongs to the peptidase S54 family. Proteolytic processing of the proenzyme produces a N-terminal fragment (NTF) and a C-terminal fragment (CTF). The processing is required for activation of the protease.

The protein localises to the cell membrane. The enzyme catalyses Cleaves type-1 transmembrane domains using a catalytic dyad composed of serine and histidine that are contributed by different transmembrane domains.. In terms of biological role, involved in regulated intramembrane proteolysis and the subsequent release of functional polypeptides from their membrane anchors. Known substrate: EFNB3. The sequence is that of Rhomboid-related protein 2 (RHBDL2) from Homo sapiens (Human).